Consider the following 386-residue polypeptide: Probable dual-specificity RNA methyltransferase RlmN (386 aa).

The Proton acceptor role is filled by glutamate 123. Positions 129–372 constitute a Radical SAM core domain; sequence YPTRTTLCIS…ATLRDTRGQD (244 aa). Cysteine 136 and cysteine 377 form a disulfide bridge. Residues cysteine 143, cysteine 147, and cysteine 150 each contribute to the [4Fe-4S] cluster site. S-adenosyl-L-methionine is bound by residues 198-199, serine 232, 255-257, and asparagine 334; these read GE and SLH. Cysteine 377 serves as the catalytic S-methylcysteine intermediate.

Belongs to the radical SAM superfamily. RlmN family. [4Fe-4S] cluster serves as cofactor.

Its subcellular location is the cytoplasm. The enzyme catalyses adenosine(2503) in 23S rRNA + 2 reduced [2Fe-2S]-[ferredoxin] + 2 S-adenosyl-L-methionine = 2-methyladenosine(2503) in 23S rRNA + 5'-deoxyadenosine + L-methionine + 2 oxidized [2Fe-2S]-[ferredoxin] + S-adenosyl-L-homocysteine. It catalyses the reaction adenosine(37) in tRNA + 2 reduced [2Fe-2S]-[ferredoxin] + 2 S-adenosyl-L-methionine = 2-methyladenosine(37) in tRNA + 5'-deoxyadenosine + L-methionine + 2 oxidized [2Fe-2S]-[ferredoxin] + S-adenosyl-L-homocysteine. Its function is as follows. Specifically methylates position 2 of adenine 2503 in 23S rRNA and position 2 of adenine 37 in tRNAs. This chain is Probable dual-specificity RNA methyltransferase RlmN, found in Bifidobacterium adolescentis (strain ATCC 15703 / DSM 20083 / NCTC 11814 / E194a).